We begin with the raw amino-acid sequence, 211 residues long: Small ribosomal subunit protein uS3 (211 aa).

The KH type-2 domain occupies 38 to 106; the sequence is LRNFLKKRLY…EVYLNIQEVR (69 aa).

The protein belongs to the universal ribosomal protein uS3 family. Part of the 30S ribosomal subunit. Forms a tight complex with proteins S10 and S14.

Its function is as follows. Binds the lower part of the 30S subunit head. Binds mRNA in the 70S ribosome, positioning it for translation. This Geobacter sp. (strain M21) protein is Small ribosomal subunit protein uS3.